The primary structure comprises 238 residues: Ribonuclease PH (238 aa).

Phosphate contacts are provided by residues arginine 86 and 124–126 (GTR).

It belongs to the RNase PH family. Homohexameric ring arranged as a trimer of dimers.

The catalysed reaction is tRNA(n+1) + phosphate = tRNA(n) + a ribonucleoside 5'-diphosphate. Phosphorolytic 3'-5' exoribonuclease that plays an important role in tRNA 3'-end maturation. Removes nucleotide residues following the 3'-CCA terminus of tRNAs; can also add nucleotides to the ends of RNA molecules by using nucleoside diphosphates as substrates, but this may not be physiologically important. Probably plays a role in initiation of 16S rRNA degradation (leading to ribosome degradation) during starvation. This is Ribonuclease PH from Vibrio atlanticus (strain LGP32) (Vibrio splendidus (strain Mel32)).